A 914-amino-acid polypeptide reads, in one-letter code: Solute carrier family 12 member 9 (914 aa).

The Cytoplasmic portion of the chain corresponds to 1–36; sequence MASESSPLLAYRLLGEEGAAFPPNGAGVSGVPSSRK. Serine 6 bears the Phosphoserine mark. A helical transmembrane segment spans residues 37–57; sequence LSTFLGVVVPTVLSMFSIVVF. The Extracellular segment spans residues 58–72; it reads LRIGFVVGHAGLLQA. The chain crosses the membrane as a helical span at residues 73 to 93; that stretch reads LAMLLVAYIILALTVLSVCAI. Topologically, residues 94-119 are cytoplasmic; sequence ATNGAVRGGGAYFMISRTLGPEVGGS. The helical transmembrane segment at 120-140 threads the bilayer; it reads IGLMFYLANVCGCAVSLLGLV. Residues 141–167 are Extracellular-facing; that stretch reads ESILDVFGADATGSSGIQVLPQGYGWN. Residues 168–188 form a helical membrane-spanning segment; it reads LLYGSLLLGLVGGVCTLGAGL. Over 189-193 the chain is Cytoplasmic; it reads YARAS. A helical membrane pass occupies residues 194-214; that stretch reads FLTFLLVSGSLASVLVSFVAV. The Extracellular segment spans residues 215 to 262; sequence GPRNIPLAPRPGTNASSVPHRHGHFTGFNGSTLRDNLGAGYAEDYTTG. Asparagine 228 and asparagine 243 each carry an N-linked (GlcNAc...) asparagine glycan. A helical membrane pass occupies residues 263–283; sequence AMMTFASVFAVLFNGCTGIMA. At 284–297 the chain is on the cytoplasmic side; that stretch reads GANMSGELKDPSRA. Residues 298 to 318 traverse the membrane as a helical segment; the sequence is IPLGTIIAVAYTFFIYILLFF. Topologically, residues 319–338 are extracellular; that stretch reads LSSFTCDRALLQEDYGFFRD. A helical membrane pass occupies residues 339–359; the sequence is ISLWPPLVLIGIYATALSASM. At 360 to 376 the chain is on the cytoplasmic side; the sequence is SSLIGASRILHALAQDD. A helical membrane pass occupies residues 377 to 399; sequence LFGVILAPAKVVSGGGNPWGAVL. Over 400-416 the chain is Extracellular; that stretch reads YSWGLVQLVLLAGKLNT. Residues 417–437 traverse the membrane as a helical segment; that stretch reads LAAVVTVFYLVAYAAVDLSCL. Over 438–466 the chain is Cytoplasmic; it reads SLEWASAPNFRPTFSLFSWHTCLLGVASC. Residues 467–487 traverse the membrane as a helical segment; sequence LLMMFLISPGAAGGSLLLMGL. Over 488–740 the chain is Extracellular; sequence LSALLTARGG…LLRPRGGPGY (253 aa). Positions 645-678 are disordered; the sequence is PAFSEPAEGTREGGSPALSTLFPPPRAPGSPRAL. Residues 741 to 761 form a helical membrane-spanning segment; it reads VDVCGLFLLQMATILSMVPAW. Residues 762–914 lie on the Cytoplasmic side of the membrane; sequence HSARLRIFLC…GVTPVTCTDL (153 aa). The interval 844–864 is disordered; that stretch reads QGRGTVGGPGGPEGRDGEEGP.

It belongs to the SLC12A transporter family. Interacts with SLC12A1.

It localises to the cell membrane. It is found in the lysosome membrane. In terms of biological role, may be an inhibitor of SLC12A1. Seems to correspond to a subunit of a multimeric transport system and thus, additional subunits may be required for its function. May play a role in lysosomal ion flux and osmoregulation. The sequence is that of Solute carrier family 12 member 9 (Slc12a9) from Mus musculus (Mouse).